Here is a 161-residue protein sequence, read N- to C-terminus: DNA-directed RNA polymerase 19 kDa subunit (161 aa).

A compositionally biased stretch (acidic residues) spans 1–32 (MADTDDIIDYESDDLTEYEDDEEDGESLETSD). The tract at residues 1 to 35 (MADTDDIIDYESDDLTEYEDDEEDGESLETSDIDP) is disordered.

Belongs to the poxviridae DNA-directed RNA polymerase 19 kDa subunit family. The DNA-dependent RNA polymerase used for intermediate and late genes expression consists of eight subunits Rpo30/OPG66, Rpo7/OPG90, Rpo22/OPG103, Rpo147/OPG105, Rpo18/OPG119, Rpo19/OPG131, Rpo132/OPG151 and Rpo35/OPG156. The same holoenzyme, with the addition of the transcription-specificity factor OPG109, is used for early gene expression.

The protein resides in the virion. The catalysed reaction is RNA(n) + a ribonucleoside 5'-triphosphate = RNA(n+1) + diphosphate. In terms of biological role, part of the DNA-dependent RNA polymerase which catalyzes the transcription of viral DNA into RNA using the four ribonucleoside triphosphates as substrates. Responsible for the transcription of early, intermediate and late genes. DNA-dependent RNA polymerase associates with the early transcription factor (ETF), itself composed of OPG118 and OPG133, thereby allowing the early genes transcription. Late transcription, and probably also intermediate transcription, require newly synthesized RNA polymerase. The chain is DNA-directed RNA polymerase 19 kDa subunit (OPG131) from Monkeypox virus.